A 202-amino-acid chain; its full sequence is Recombination protein RecR (202 aa).

The C4-type zinc finger occupies 58–73 (CANCGNLTDKKLCDIC). Residues 81–178 (SVITVVEDSM…KVSRIAMGVP (98 aa)) enclose the Toprim domain.

It belongs to the RecR family.

In terms of biological role, may play a role in DNA repair. It seems to be involved in an RecBC-independent recombinational process of DNA repair. It may act with RecF and RecO. This is Recombination protein RecR from Finegoldia magna (strain ATCC 29328 / DSM 20472 / WAL 2508) (Peptostreptococcus magnus).